A 173-amino-acid chain; its full sequence is Superoxide dismutase [Cu-Zn] (173 aa).

An N-terminal signal peptide occupies residues 1-22; that stretch reads MNKAKTLLFTALAFGLSHQALA. Cu cation-binding residues include histidine 67, histidine 69, and histidine 92. Residues cysteine 74 and cysteine 169 are joined by a disulfide bond. Histidine 92, histidine 101, histidine 110, and aspartate 113 together coordinate Zn(2+). Histidine 147 serves as a coordination point for Cu cation.

It belongs to the Cu-Zn superoxide dismutase family. As to quaternary structure, homodimer. Cu cation serves as cofactor. The cofactor is Zn(2+).

The protein localises to the periplasm. It catalyses the reaction 2 superoxide + 2 H(+) = H2O2 + O2. Functionally, destroys radicals which are normally produced within the cells and which are toxic to biological systems. The polypeptide is Superoxide dismutase [Cu-Zn] (sodC) (Photobacterium leiognathi).